The sequence spans 276 residues: Rhomboid protease GlpG (276 aa).

A run of 6 helical transmembrane segments spans residues 94-114 (GPVT…MQIL), 142-162 (ALMH…WYLG), 169-189 (LGSG…GYVQ), 192-212 (FSGP…GYVW), 229-249 (LIIF…GMSM), and 250-270 (ANGA…VDSL). Ser-201 serves as the catalytic Nucleophile. His-254 is an active-site residue.

The protein belongs to the peptidase S54 family.

The protein localises to the cell inner membrane. It catalyses the reaction Cleaves type-1 transmembrane domains using a catalytic dyad composed of serine and histidine that are contributed by different transmembrane domains.. Functionally, rhomboid-type serine protease that catalyzes intramembrane proteolysis. The sequence is that of Rhomboid protease GlpG from Escherichia coli (strain 55989 / EAEC).